The chain runs to 141 residues: Large ribosomal subunit protein uL11 (141 aa).

It belongs to the universal ribosomal protein uL11 family. As to quaternary structure, part of the ribosomal stalk of the 50S ribosomal subunit. Interacts with L10 and the large rRNA to form the base of the stalk. L10 forms an elongated spine to which L12 dimers bind in a sequential fashion forming a multimeric L10(L12)X complex. One or more lysine residues are methylated.

Forms part of the ribosomal stalk which helps the ribosome interact with GTP-bound translation factors. The protein is Large ribosomal subunit protein uL11 of Synechocystis sp. (strain ATCC 27184 / PCC 6803 / Kazusa).